The sequence spans 303 residues: Methionyl-tRNA formyltransferase (303 aa).

110–113 contributes to the (6S)-5,6,7,8-tetrahydrofolate binding site; that stretch reads SLLP.

Belongs to the Fmt family.

It carries out the reaction L-methionyl-tRNA(fMet) + (6R)-10-formyltetrahydrofolate = N-formyl-L-methionyl-tRNA(fMet) + (6S)-5,6,7,8-tetrahydrofolate + H(+). Functionally, attaches a formyl group to the free amino group of methionyl-tRNA(fMet). The formyl group appears to play a dual role in the initiator identity of N-formylmethionyl-tRNA by promoting its recognition by IF2 and preventing the misappropriation of this tRNA by the elongation apparatus. The polypeptide is Methionyl-tRNA formyltransferase (Ehrlichia ruminantium (strain Welgevonden)).